Here is a 292-residue protein sequence, read N- to C-terminus: Formamidopyrimidine-DNA glycosylase (292 aa).

Pro2 acts as the Schiff-base intermediate with DNA in catalysis. The active-site Proton donor is Glu3. Residue Lys60 is the Proton donor; for beta-elimination activity of the active site. Positions 109, 128, and 173 each coordinate DNA. The segment at 258–292 (NVYRRTGRECRKCGNLIERQKITGRSTHWCPNCQK) adopts an FPG-type zinc-finger fold. The active-site Proton donor; for delta-elimination activity is Arg282.

This sequence belongs to the FPG family. Monomer. The cofactor is Zn(2+).

It catalyses the reaction Hydrolysis of DNA containing ring-opened 7-methylguanine residues, releasing 2,6-diamino-4-hydroxy-5-(N-methyl)formamidopyrimidine.. The enzyme catalyses 2'-deoxyribonucleotide-(2'-deoxyribose 5'-phosphate)-2'-deoxyribonucleotide-DNA = a 3'-end 2'-deoxyribonucleotide-(2,3-dehydro-2,3-deoxyribose 5'-phosphate)-DNA + a 5'-end 5'-phospho-2'-deoxyribonucleoside-DNA + H(+). Its function is as follows. Involved in base excision repair of DNA damaged by oxidation or by mutagenic agents. Acts as a DNA glycosylase that recognizes and removes damaged bases. Has a preference for oxidized purines, such as 7,8-dihydro-8-oxoguanine (8-oxoG). Has AP (apurinic/apyrimidinic) lyase activity and introduces nicks in the DNA strand. Cleaves the DNA backbone by beta-delta elimination to generate a single-strand break at the site of the removed base with both 3'- and 5'-phosphates. The chain is Formamidopyrimidine-DNA glycosylase from Prochlorococcus marinus (strain MIT 9301).